The following is a 235-amino-acid chain: Ribonuclease PH (235 aa).

Residues Arg86 and 124 to 126 (GTR) contribute to the phosphate site.

It belongs to the RNase PH family. In terms of assembly, homohexameric ring arranged as a trimer of dimers.

The catalysed reaction is tRNA(n+1) + phosphate = tRNA(n) + a ribonucleoside 5'-diphosphate. Phosphorolytic 3'-5' exoribonuclease that plays an important role in tRNA 3'-end maturation. Removes nucleotide residues following the 3'-CCA terminus of tRNAs; can also add nucleotides to the ends of RNA molecules by using nucleoside diphosphates as substrates, but this may not be physiologically important. Probably plays a role in initiation of 16S rRNA degradation (leading to ribosome degradation) during starvation. This Francisella tularensis subsp. tularensis (strain FSC 198) protein is Ribonuclease PH.